Here is a 195-residue protein sequence, read N- to C-terminus: Holliday junction branch migration complex subunit RuvA (195 aa).

Residues 1–66 form a domain I region; that stretch reads MNYLVFKVIY…LIIKDLYGFR (66 aa). Positions 67–141 are domain II; it reads TYNERLLFID…KYINKVSEKN (75 aa). Position 141 (Asn-141) is a region of interest, flexible linker. The interval 141–195 is domain III; the sequence is NPWAKELSIGLENLGYDKKDIEYAITKVKVDTQQNIDISEIIGCAIKEISLRHEN.

Belongs to the RuvA family. Homotetramer. Forms an RuvA(8)-RuvB(12)-Holliday junction (HJ) complex. HJ DNA is sandwiched between 2 RuvA tetramers; dsDNA enters through RuvA and exits via RuvB. An RuvB hexamer assembles on each DNA strand where it exits the tetramer. Each RuvB hexamer is contacted by two RuvA subunits (via domain III) on 2 adjacent RuvB subunits; this complex drives branch migration. In the full resolvosome a probable DNA-RuvA(4)-RuvB(12)-RuvC(2) complex forms which resolves the HJ.

It localises to the cytoplasm. Its function is as follows. The RuvA-RuvB-RuvC complex processes Holliday junction (HJ) DNA during genetic recombination and DNA repair, while the RuvA-RuvB complex plays an important role in the rescue of blocked DNA replication forks via replication fork reversal (RFR). RuvA specifically binds to HJ cruciform DNA, conferring on it an open structure. The RuvB hexamer acts as an ATP-dependent pump, pulling dsDNA into and through the RuvAB complex. HJ branch migration allows RuvC to scan DNA until it finds its consensus sequence, where it cleaves and resolves the cruciform DNA. The sequence is that of Holliday junction branch migration complex subunit RuvA from Ureaplasma urealyticum serovar 10 (strain ATCC 33699 / Western).